Consider the following 76-residue polypeptide: Horsegram inhibitor 1 (76 aa).

7 disulfides stabilise this stretch: Cys16/Cys70, Cys17/Cys32, Cys20/Cys66, Cys22/Cys30, Cys40/Cys47, Cys44/Cys59, and Cys49/Cys57.

The protein belongs to the Bowman-Birk serine protease inhibitor family. As to quaternary structure, HGI-III exists in a state of equilibrium between monomer, homodimer and trimer, with homodimer being the predominant form. The homodimer is stabilized by the non-covalent interaction between Lys-24 of one subunit and Asp-76 of the other subunit. The homodimer is more thermostable than the monomer. HGGI-I, HGGI-II and HGGI-III exist as monomers. In terms of processing, HGGI-I, HGGI-II and HGGI-III are produced by proteolysis of the N- and C-termini of HGI-III.

Functionally, inhibitors of trypsin and chymotrypsin. HGGI-III has a higher activity than HGGI-I or HGGI-II. The polypeptide is Horsegram inhibitor 1 (Vigna unguiculata subsp. cylindrica (Horse gram)).